The sequence spans 618 residues: UvrABC system protein C (618 aa).

The GIY-YIG domain occupies Asp13 to Ile92. The UVR domain maps to Leu204–Ile239.

The protein belongs to the UvrC family. Interacts with UvrB in an incision complex.

The protein localises to the cytoplasm. Functionally, the UvrABC repair system catalyzes the recognition and processing of DNA lesions. UvrC both incises the 5' and 3' sides of the lesion. The N-terminal half is responsible for the 3' incision and the C-terminal half is responsible for the 5' incision. The sequence is that of UvrABC system protein C from Clostridium botulinum (strain Langeland / NCTC 10281 / Type F).